Consider the following 564-residue polypeptide: Arginine--tRNA ligase (564 aa).

The 'HIGH' region motif lies at 122 to 132 (PNIAKPFSIGH).

The protein belongs to the class-I aminoacyl-tRNA synthetase family. As to quaternary structure, monomer.

It localises to the cytoplasm. The catalysed reaction is tRNA(Arg) + L-arginine + ATP = L-arginyl-tRNA(Arg) + AMP + diphosphate. This Lactococcus lactis subsp. cremoris (strain MG1363) protein is Arginine--tRNA ligase.